Consider the following 165-residue polypeptide: NAD(P)H-quinone oxidoreductase subunit I, chloroplastic (165 aa).

4Fe-4S ferredoxin-type domains are found at residues 55-84 (GRIH…VDWE) and 95-124 (KSYS…MTEE). [4Fe-4S] cluster is bound by residues cysteine 64, cysteine 67, cysteine 70, cysteine 74, cysteine 104, cysteine 107, cysteine 110, and cysteine 114.

This sequence belongs to the complex I 23 kDa subunit family. In terms of assembly, NDH is composed of at least 16 different subunits, 5 of which are encoded in the nucleus. The cofactor is [4Fe-4S] cluster.

The protein localises to the plastid. The protein resides in the chloroplast thylakoid membrane. It carries out the reaction a plastoquinone + NADH + (n+1) H(+)(in) = a plastoquinol + NAD(+) + n H(+)(out). It catalyses the reaction a plastoquinone + NADPH + (n+1) H(+)(in) = a plastoquinol + NADP(+) + n H(+)(out). Functionally, NDH shuttles electrons from NAD(P)H:plastoquinone, via FMN and iron-sulfur (Fe-S) centers, to quinones in the photosynthetic chain and possibly in a chloroplast respiratory chain. The immediate electron acceptor for the enzyme in this species is believed to be plastoquinone. Couples the redox reaction to proton translocation, and thus conserves the redox energy in a proton gradient. This chain is NAD(P)H-quinone oxidoreductase subunit I, chloroplastic, found in Psilotum nudum (Whisk fern).